Reading from the N-terminus, the 879-residue chain is Beta-alanyl-bioamine nonribosomal peptide synthetase ebony (879 aa).

The tract at residues 26 to 540 (FEEQQLRHAD…EHVPLLVNGK (515 aa)) is adenylation. A Carrier domain is found at 573–650 (EDLKLTARDL…EIIEKMAANH (78 aa)). S611 bears the O-(pantetheine 4'-phosphoryl)serine mark. Residues 666 to 679 (LKMEAVPLRLEHRQ) form a condensation region. E696 is a binding site for dopamine. E696 lines the histamine pocket. The beta-alanine site is built by T825 and N827.

Belongs to the NRP synthetase family. The cofactor is pantetheine 4'-phosphate. Mg(2+) is required as a cofactor. Expressed in the optic neuropils in the lamina and in distinct cells at the distal border of the medulla cortex (at protein level). Expressed in the protocerebrum and thoracic ganglia (at protein level). Expressed in antennal lobes, antennal nerves and subesophagic ganglion (at protein level). Specifically, expressed in epithelial glial cells of the medulla that surround the synaptic cleft of photoreceptor axonal endings (at protein level). Expressed in some cells in the cuticle.

The protein resides in the cytoplasm. It catalyses the reaction histamine + beta-alanine + ATP = carcinine + AMP + diphosphate + H(+). The catalysed reaction is beta-alanine + ATP + H(+) = beta-alanyl-5'-AMP + diphosphate. It carries out the reaction beta-alanyl-5'-AMP + holo-[peptidyl-carrier protein] = beta-alanyl-[peptidyl-carrier protein] + AMP + H(+). The enzyme catalyses beta-alanyl-[peptidyl-carrier protein] + histamine = carcinine + holo-[peptidyl-carrier protein] + H(+). It catalyses the reaction dopamine + beta-alanine + ATP = beta-alanyl-dopamine + AMP + diphosphate + H(+). The catalysed reaction is beta-alanyl-[peptidyl-carrier protein] + dopamine = beta-alanyl-dopamine + holo-[peptidyl-carrier protein] + H(+). Nonribosomal peptide synthase which is required for the regulation of histamine and dopamine levels in various tissues through their condensation with beta-alanine. In epithelial glial cells, plays an essential role in the inactivation of histamine, the main neurotransmitter in the optical nerve system, by catalyzing the conversion of histamine into carcinine. In the cuticle, catalyzes the condensation of beta-alanine with dopamine to form beta-alanyl-dopamine (NBAD), a metabolite involved in the pigmentation and sclerotization of the insect cuticle. Also, regulates the cuticular hydrocarbon composition in females. Acts downstream of the body clock to regulate circadian behavioral rhythms. Can also condense beta-alanine with biogenic amines tyramine, octopamine, and serotonin in vitro. The protein is Beta-alanyl-bioamine nonribosomal peptide synthetase ebony of Drosophila melanogaster (Fruit fly).